The sequence spans 402 residues: Pyridinium-3,5-bisthiocarboxylic acid mononucleotide nickel insertion protein (402 aa).

This sequence belongs to the LarC family.

It catalyses the reaction Ni(II)-pyridinium-3,5-bisthiocarboxylate mononucleotide = pyridinium-3,5-bisthiocarboxylate mononucleotide + Ni(2+). Its function is as follows. Involved in the biosynthesis of a nickel-pincer cofactor ((SCS)Ni(II) pincer complex). Binds Ni(2+), and functions in nickel delivery to pyridinium-3,5-bisthiocarboxylic acid mononucleotide (P2TMN), to form the mature cofactor. Is thus probably required for the activation of nickel-pincer cofactor-dependent enzymes. The sequence is that of Pyridinium-3,5-bisthiocarboxylic acid mononucleotide nickel insertion protein from Thermotoga sp. (strain RQ2).